The primary structure comprises 239 residues: Flagellin B3 (239 aa).

The propeptide occupies 1-11; it reads MLKNFMKNKKG. 2 N-linked (GlcNAc...) asparagine glycosylation sites follow: N115 and N128.

It belongs to the archaeal flagellin family. In terms of processing, N-linked glycans consist of the 779 Da trisaccharide beta-ManNAc(Thr)-(1-4)-beta-GlcNAc3NAcA-(1-3)-beta-GlcNAc.

The protein localises to the archaeal flagellum. Functionally, flagellin is the subunit protein which polymerizes to form the filaments of archaeal flagella. This Methanococcus voltae protein is Flagellin B3 (flaB3).